A 242-amino-acid chain; its full sequence is Probable transcriptional regulatory protein Bamb_2332 (242 aa).

It belongs to the TACO1 family.

The protein resides in the cytoplasm. The sequence is that of Probable transcriptional regulatory protein Bamb_2332 from Burkholderia ambifaria (strain ATCC BAA-244 / DSM 16087 / CCUG 44356 / LMG 19182 / AMMD) (Burkholderia cepacia (strain AMMD)).